A 726-amino-acid polypeptide reads, in one-letter code: Probable cadmium-transporting ATPase (726 aa).

The HMA domain occupies 11-74 (DKQVYRVEGF…AGAFENLKVF (64 aa)). 2 residues coordinate Cd(2+): Cys22 and Cys25. The next 5 membrane-spanning stretches (helical) occupy residues 105 to 125 (STLLFATLLIAFGYLSHFVNG), 129 to 149 (LVTSMLFVGSIVIGGYSLFKV), 163 to 179 (TLMTVAVIGAAIIGEWA), 335 to 355 (IIMVIAALVAVVPPLFFGGSW), and 363 to 383 (LAVLVVGCPCALVISTPISIV). Asp414 (4-aspartylphosphate intermediate) is an active-site residue. A run of 2 helical transmembrane segments spans residues 671–693 (LNIIKANITFAIGIKIIALLLVI) and 698–720 (TLWIAILSDMGATILVALNSLRL).

The protein belongs to the cation transport ATPase (P-type) (TC 3.A.3) family. Type IB subfamily.

It localises to the cell membrane. The enzyme catalyses Cd(2+)(in) + ATP + H2O = Cd(2+)(out) + ADP + phosphate + H(+). Functionally, couples the hydrolysis of ATP with the export of cadmium. The protein is Probable cadmium-transporting ATPase (cadA) of Staphylococcus aureus (strain MRSA252).